The primary structure comprises 293 residues: ATP phosphoribosyltransferase (293 aa).

Belongs to the ATP phosphoribosyltransferase family. Long subfamily. Mg(2+) is required as a cofactor.

It localises to the cytoplasm. The enzyme catalyses 1-(5-phospho-beta-D-ribosyl)-ATP + diphosphate = 5-phospho-alpha-D-ribose 1-diphosphate + ATP. It functions in the pathway amino-acid biosynthesis; L-histidine biosynthesis; L-histidine from 5-phospho-alpha-D-ribose 1-diphosphate: step 1/9. Feedback inhibited by histidine. In terms of biological role, catalyzes the condensation of ATP and 5-phosphoribose 1-diphosphate to form N'-(5'-phosphoribosyl)-ATP (PR-ATP). Has a crucial role in the pathway because the rate of histidine biosynthesis seems to be controlled primarily by regulation of HisG enzymatic activity. The protein is ATP phosphoribosyltransferase of Nitratidesulfovibrio vulgaris (strain DSM 19637 / Miyazaki F) (Desulfovibrio vulgaris).